Consider the following 1562-residue polypeptide: Phospholipid-transporting ATPase dnf1 (1562 aa).

Disordered regions lie at residues 1–38, 55–94, 115–134, and 146–166; these read MKSS…ADDG, LPLG…SDSR, TPST…KKAH, and PLDD…NGRP. Over 1-275 the chain is Extracellular; the sequence is MKSSGIAGDS…IAIMQMIPGW (275 aa). Positions 12-21 are enriched in polar residues; the sequence is GFETNFLNET. Over residues 60-69 the composition is skewed to acidic residues; the sequence is DENELDEIDI. The segment covering 71–86 has biased composition (basic and acidic residues); it reads GDSKKLDSVEVDESHD. Residues 276–296 traverse the membrane as a helical segment; it reads STTGTYTTIIPLLIFISIAIL. Topologically, residues 297–574 are cytoplasmic; that stretch reads REGFDNYRRY…APSMQKVTNR (278 aa). Residues 347–406 form a disordered region; sequence SQESASRSTIRSTDEREPERTSEDPPQLPPSPSSPSSPALSVKPNIDPQPPLYNSTLTTT. The segment covering 358 to 369 has biased composition (basic and acidic residues); the sequence is STDEREPERTSE. Positions 372 to 381 are enriched in pro residues; it reads PQLPPSPSSP. A helical membrane pass occupies residues 575–595; the sequence is IVIFIFALVVSMAIYCTAAYF. The Extracellular segment spans residues 596-614; sequence VWQKKVERKLWYLTNSKLS. The chain crosses the membrane as a helical span at residues 615-635; that stretch reads FVPILVSFIILYNTMVPISLY. Topologically, residues 636 to 1309 are cytoplasmic; that stretch reads VSMEIIRVFQ…YILGTFYKEQ (674 aa). Catalysis depends on D684, which acts as the 4-aspartylphosphate intermediate. ATP is bound by residues D684, K685, T686, E794, F843, S845, K848, and K866. D684 provides a ligand contact to Mg(2+). T686 lines the Mg(2+) pocket. Phosphoserine is present on S954. ATP contacts are provided by residues R1022, T1023, T1102, G1103, D1104, 1181–1188, R1216, and K1222; that span reads VIVIDGST. A Mg(2+)-binding site is contributed by D1243. Residues N1246 and D1247 each contribute to the ATP site. Residues 1310-1330 traverse the membrane as a helical segment; sequence FFFLMQAIMQPFVGYTGQSLY. Topologically, residues 1331 to 1332 are extracellular; the sequence is ES. The helical transmembrane segment at 1333 to 1353 threads the bilayer; sequence WGLTCFNTLFSSLCVIGLGIF. Residues 1354 to 1381 lie on the Cytoplasmic side of the membrane; that stretch reads EKDLSASTVIAVPELYQKGINNEAFNWR. Residues 1382 to 1402 traverse the membrane as a helical segment; sequence VYFGWCSIAFIQAFLVFYVTY. At 1403-1414 the chain is on the extracellular side; it reads SLFGMKELNDNN. A helical transmembrane segment spans residues 1415–1435; it reads IFAYGQLIFTAAIFIMNFKLV. The Cytoplasmic portion of the chain corresponds to 1436 to 1443; sequence FIEMQYIN. A helical transmembrane segment spans residues 1444–1464; the sequence is IISIIVLVLTSLAWFLFNIFI. Residues 1465-1490 are Extracellular-facing; the sequence is SEHYPDKNLYLARSQFLHHFGKNPSW. Residues 1491–1511 traverse the membrane as a helical segment; the sequence is WLTMLFVMVCALTIDIVAQML. Residues 1512-1562 lie on the Cytoplasmic side of the membrane; the sequence is RRTLRPTDTDIFVEMENDAFVRSRFEQESGEFLQANAPSVDEIEQYLKSRD.

This sequence belongs to the cation transport ATPase (P-type) (TC 3.A.3) family. Type IV subfamily. The cofactor is Mg(2+).

Its subcellular location is the golgi apparatus. It localises to the trans-Golgi network membrane. The protein localises to the endosome membrane. It carries out the reaction ATP + H2O + phospholipidSide 1 = ADP + phosphate + phospholipidSide 2.. The enzyme catalyses a 1,2-diacyl-sn-glycero-3-phosphocholine(out) + ATP + H2O = a 1,2-diacyl-sn-glycero-3-phosphocholine(in) + ADP + phosphate + H(+). It catalyses the reaction a 1,2-diacyl-sn-glycero-3-phosphoethanolamine(out) + ATP + H2O = a 1,2-diacyl-sn-glycero-3-phosphoethanolamine(in) + ADP + phosphate + H(+). Its function is as follows. Catalytic component of a P4-ATPase flippase complex which catalyzes the hydrolysis of ATP coupled to the transport of phosphatidylcholine and small amounts of phosphatidylethanolamine from the lumen to the cytosolic leaflet of the trans-Golgi network and ensures the maintenance of asymmetric distribution of phospholipids. May be involved in transport from early endosomes to the trans-Golgi network (TGN). The protein is Phospholipid-transporting ATPase dnf1 of Schizosaccharomyces pombe (strain 972 / ATCC 24843) (Fission yeast).